A 271-amino-acid chain; its full sequence is Aliphatic sulfonates import ATP-binding protein SsuB (271 aa).

The ABC transporter domain occupies 13 to 234 (ITLESIGKRY…RKGSAKLAAL (222 aa)). An ATP-binding site is contributed by 45–52 (GRSGCGKS). Positions 250–271 (EASRQGIKASRQGTATSRRVAN) are disordered. The segment covering 260 to 271 (RQGTATSRRVAN) has biased composition (polar residues).

This sequence belongs to the ABC transporter superfamily. Aliphatic sulfonates importer (TC 3.A.1.17.2) family. The complex is composed of two ATP-binding proteins (SsuB), two transmembrane proteins (SsuC) and a solute-binding protein (SsuA).

The protein resides in the cell inner membrane. The catalysed reaction is ATP + H2O + aliphatic sulfonate-[sulfonate-binding protein]Side 1 = ADP + phosphate + aliphatic sulfonateSide 2 + [sulfonate-binding protein]Side 1.. Part of the ABC transporter complex SsuABC involved in aliphatic sulfonates import. Responsible for energy coupling to the transport system. This chain is Aliphatic sulfonates import ATP-binding protein SsuB, found in Yersinia pestis bv. Antiqua (strain Antiqua).